A 143-amino-acid chain; its full sequence is Nucleoside diphosphate kinase (143 aa).

The ATP site is built by K11, F59, R87, T93, R104, and N114. Residue H117 is the Pros-phosphohistidine intermediate of the active site.

The protein belongs to the NDK family. Homotetramer. Requires Mg(2+) as cofactor.

Its subcellular location is the cytoplasm. It carries out the reaction a 2'-deoxyribonucleoside 5'-diphosphate + ATP = a 2'-deoxyribonucleoside 5'-triphosphate + ADP. The catalysed reaction is a ribonucleoside 5'-diphosphate + ATP = a ribonucleoside 5'-triphosphate + ADP. Functionally, major role in the synthesis of nucleoside triphosphates other than ATP. The ATP gamma phosphate is transferred to the NDP beta phosphate via a ping-pong mechanism, using a phosphorylated active-site intermediate. In Ectopseudomonas mendocina (strain ymp) (Pseudomonas mendocina), this protein is Nucleoside diphosphate kinase.